Reading from the N-terminus, the 134-residue chain is uncharacterized protein (134 aa).

This is an uncharacterized protein from Thermoproteus tenax virus 1 (strain KRA1) (TTV1).